A 446-amino-acid chain; its full sequence is Cyclin-T1-1 (446 aa).

Belongs to the cyclin family. Cyclin T subfamily.

In Oryza sativa subsp. japonica (Rice), this protein is Cyclin-T1-1 (CYCT1-1).